Reading from the N-terminus, the 340-residue chain is Ketol-acid reductoisomerase (NADP(+)) (340 aa).

A KARI N-terminal Rossmann domain is found at 3-182 (VQMEYEKDVK…GAARVGLLET (180 aa)). NADP(+)-binding positions include 26-29 (YGSQ), arginine 49, serine 53, and 83-86 (DEIQ). Residue histidine 108 is part of the active site. Glycine 134 serves as a coordination point for NADP(+). A KARI C-terminal knotted domain is found at 183–328 (TYKEETEEDL…AELRKAMPFV (146 aa)). Aspartate 191, glutamate 195, glutamate 227, and glutamate 231 together coordinate Mg(2+). Serine 252 contacts substrate.

Belongs to the ketol-acid reductoisomerase family. It depends on Mg(2+) as a cofactor.

It catalyses the reaction (2R)-2,3-dihydroxy-3-methylbutanoate + NADP(+) = (2S)-2-acetolactate + NADPH + H(+). It carries out the reaction (2R,3R)-2,3-dihydroxy-3-methylpentanoate + NADP(+) = (S)-2-ethyl-2-hydroxy-3-oxobutanoate + NADPH + H(+). The protein operates within amino-acid biosynthesis; L-isoleucine biosynthesis; L-isoleucine from 2-oxobutanoate: step 2/4. Its pathway is amino-acid biosynthesis; L-valine biosynthesis; L-valine from pyruvate: step 2/4. In terms of biological role, involved in the biosynthesis of branched-chain amino acids (BCAA). Catalyzes an alkyl-migration followed by a ketol-acid reduction of (S)-2-acetolactate (S2AL) to yield (R)-2,3-dihydroxy-isovalerate. In the isomerase reaction, S2AL is rearranged via a Mg-dependent methyl migration to produce 3-hydroxy-3-methyl-2-ketobutyrate (HMKB). In the reductase reaction, this 2-ketoacid undergoes a metal-dependent reduction by NADPH to yield (R)-2,3-dihydroxy-isovalerate. This Streptococcus pneumoniae (strain Hungary19A-6) protein is Ketol-acid reductoisomerase (NADP(+)).